Consider the following 407-residue polypeptide: Accessory Sec system protein translocase subunit SecY2 (407 aa).

10 consecutive transmembrane segments (helical) span residues 13–33 (FLWT…TLPF), 65–85 (FFSI…MFTV), 104–124 (MLLT…NLPL), 133–153 (GTIV…LIWL), 158–178 (SSMG…SYIP), 192–212 (PLIL…AVLV), 248–268 (IMYA…LLFF), 287–307 (IPWF…FAFI), 345–365 (FAFV…LLIF), and 370–390 (YMRL…VFSI).

The protein belongs to the SecY/SEC61-alpha family. SecY2 subfamily. May form heterotrimers with SecE and SecG subunits (Potential). Component of the accessory SecA2/SecY2 protein translocase complex required to export cell wall protein GspB.

The protein resides in the cell membrane. The central subunit of a protein translocation channel (Potential). Part of the accessory SecA2/SecY2 system specifically required to export GspB, a serine-rich repeat cell wall protein encoded upstream in the same operon. The protein is Accessory Sec system protein translocase subunit SecY2 of Streptococcus gordonii.